We begin with the raw amino-acid sequence, 453 residues long: Aryl hydrocarbon receptor nuclear translocator homolog (453 aa).

Residues 44–97 (FARENHSEIERRRRNKMTHYINELAEMVPQCASLGRKPDKLTILRMAVSHMKGI) enclose the bHLH domain. 2 PAS domains span residues 115-193 (DQEL…LDLK) and 277-347 (ASMP…LSDQ). Residues 348 to 392 (PMRINIRVRTSTDYIPCTVSAYKFMNPYSEQFEYVVATHQIAPQE) form the PAC domain. Positions 410–453 (EFGELGGAPSAVDYGQSSSGGWRPEAQGAPQAQWQWDPMNGYNQ) are disordered.

In terms of assembly, interacts with hif-1. Heterodimer; efficient DNA binding requires dimerization with another bHLH protein. Forms a heterodimer with ahr-1; binds DNA as heterodimer. Forms a heterodimer with PAS domain-containing protein cky-1; binds DNA as heterodimer. Expressed in many cell types throughout development, including hypodermal cells, intestinal cells, pharyngeal cells, and neurons. Expressed in every cell during embryo.

It localises to the nucleus. Transcription factor. Efficient DNA binding requires dimerization with another bHLH protein, such as cky-1 or ahr-1. Regulates transcription of target genes, probably acting in complex with cky-1. Has a role in cellular differentiation. Required for pharyngeal development. In collaboration with ahr-1 it is involved in RMEL/R and SDQR neuron cell migration. Acts in the cellular response to hypoxia. Involved in aggregation behavior by regulating soluble guanylate cyclase gene expression in the URX neurons. This is Aryl hydrocarbon receptor nuclear translocator homolog from Caenorhabditis elegans.